Here is a 618-residue protein sequence, read N- to C-terminus: Chaperone protein DnaK (618 aa).

Thr-175 bears the Phosphothreonine; by autocatalysis mark. Residues 579–618 (GAPGAEGFDSNMAGEANAGQNANNDDNVVDADYKVEDDEK) are disordered. Residues 591–604 (AGEANAGQNANNDD) are compositionally biased toward low complexity.

This sequence belongs to the heat shock protein 70 family.

In terms of biological role, acts as a chaperone. The protein is Chaperone protein DnaK of Clostridium tetani (strain Massachusetts / E88).